The primary structure comprises 107 residues: Lipid-anchored protein YDL012C (107 aa).

The span at methionine 1–arginine 18 shows a compositional bias: polar residues. Residues methionine 1–asparagine 86 are disordered. N-acetylserine is present on serine 2. Lysine 13 is covalently cross-linked (Glycyl lysine isopeptide (Lys-Gly) (interchain with G-Cter in ubiquitin)). Residues proline 35–proline 81 are compositionally biased toward low complexity.

It belongs to the CYSTM1 family.

The protein resides in the cell membrane. This chain is Lipid-anchored protein YDL012C, found in Saccharomyces cerevisiae (strain ATCC 204508 / S288c) (Baker's yeast).